We begin with the raw amino-acid sequence, 360 residues long: UDP-N-acetylglucosamine--N-acetylmuramyl-(pentapeptide) pyrophosphoryl-undecaprenol N-acetylglucosamine transferase (360 aa).

UDP-N-acetyl-alpha-D-glucosamine is bound by residues Ser-198 and Gln-289.

The protein belongs to the glycosyltransferase 28 family. MurG subfamily.

It is found in the cell membrane. The enzyme catalyses Mur2Ac(oyl-L-Ala-gamma-D-Glu-L-Lys-D-Ala-D-Ala)-di-trans,octa-cis-undecaprenyl diphosphate + UDP-N-acetyl-alpha-D-glucosamine = beta-D-GlcNAc-(1-&gt;4)-Mur2Ac(oyl-L-Ala-gamma-D-Glu-L-Lys-D-Ala-D-Ala)-di-trans,octa-cis-undecaprenyl diphosphate + UDP + H(+). Its pathway is cell wall biogenesis; peptidoglycan biosynthesis. In terms of biological role, cell wall formation. Catalyzes the transfer of a GlcNAc subunit on undecaprenyl-pyrophosphoryl-MurNAc-pentapeptide (lipid intermediate I) to form undecaprenyl-pyrophosphoryl-MurNAc-(pentapeptide)GlcNAc (lipid intermediate II). The protein is UDP-N-acetylglucosamine--N-acetylmuramyl-(pentapeptide) pyrophosphoryl-undecaprenol N-acetylglucosamine transferase of Streptococcus pyogenes serotype M5 (strain Manfredo).